The primary structure comprises 666 residues: DNA mismatch repair protein MutL (666 aa).

It belongs to the DNA mismatch repair MutL/HexB family.

This protein is involved in the repair of mismatches in DNA. It is required for dam-dependent methyl-directed DNA mismatch repair. May act as a 'molecular matchmaker', a protein that promotes the formation of a stable complex between two or more DNA-binding proteins in an ATP-dependent manner without itself being part of a final effector complex. In Clostridium botulinum (strain 657 / Type Ba4), this protein is DNA mismatch repair protein MutL.